A 247-amino-acid chain; its full sequence is Probable transcriptional regulatory protein SynWH7803_1972 (247 aa).

This sequence belongs to the TACO1 family.

It is found in the cytoplasm. The protein is Probable transcriptional regulatory protein SynWH7803_1972 of Synechococcus sp. (strain WH7803).